The chain runs to 381 residues: Succinyl-diaminopimelate desuccinylase (381 aa).

Zn(2+) is bound at residue His-72. Asp-74 is an active-site residue. Position 103 (Asp-103) interacts with Zn(2+). Glu-133 serves as the catalytic Proton acceptor. Residues Glu-134, Glu-163, and His-348 each contribute to the Zn(2+) site.

The protein belongs to the peptidase M20A family. DapE subfamily. As to quaternary structure, homodimer. Zn(2+) is required as a cofactor. Co(2+) serves as cofactor.

The enzyme catalyses N-succinyl-(2S,6S)-2,6-diaminopimelate + H2O = (2S,6S)-2,6-diaminopimelate + succinate. The protein operates within amino-acid biosynthesis; L-lysine biosynthesis via DAP pathway; LL-2,6-diaminopimelate from (S)-tetrahydrodipicolinate (succinylase route): step 3/3. Functionally, catalyzes the hydrolysis of N-succinyl-L,L-diaminopimelic acid (SDAP), forming succinate and LL-2,6-diaminopimelate (DAP), an intermediate involved in the bacterial biosynthesis of lysine and meso-diaminopimelic acid, an essential component of bacterial cell walls. The protein is Succinyl-diaminopimelate desuccinylase of Anaplasma marginale (strain Florida).